Reading from the N-terminus, the 380-residue chain is Cytochrome b (380 aa).

The next 4 helical transmembrane spans lie at phenylalanine 34–methionine 54, tryptophan 78–isoleucine 99, tryptophan 114–leucine 134, and phenylalanine 179–threonine 199. Histidine 84 and histidine 98 together coordinate heme b. The heme b site is built by histidine 183 and histidine 197. Histidine 202 provides a ligand contact to a ubiquinone. 4 helical membrane-spanning segments follow: residues leucine 227 to serine 247, leucine 289 to histidine 309, leucine 321 to serine 341, and phenylalanine 348 to proline 368.

It belongs to the cytochrome b family. In terms of assembly, the cytochrome bc1 complex contains 11 subunits: 3 respiratory subunits (MT-CYB, CYC1 and UQCRFS1), 2 core proteins (UQCRC1 and UQCRC2) and 6 low-molecular weight proteins (UQCRH/QCR6, UQCRB/QCR7, UQCRQ/QCR8, UQCR10/QCR9, UQCR11/QCR10 and a cleavage product of UQCRFS1). This cytochrome bc1 complex then forms a dimer. It depends on heme b as a cofactor.

Its subcellular location is the mitochondrion inner membrane. In terms of biological role, component of the ubiquinol-cytochrome c reductase complex (complex III or cytochrome b-c1 complex) that is part of the mitochondrial respiratory chain. The b-c1 complex mediates electron transfer from ubiquinol to cytochrome c. Contributes to the generation of a proton gradient across the mitochondrial membrane that is then used for ATP synthesis. The sequence is that of Cytochrome b (MT-CYB) from Hydrobates pelagicus (European storm-petrel).